Consider the following 438-residue polypeptide: MSTLEKVSERIKNSLFVPIDNNNMQDSINSNEVSGQVATLFANVPLGPVDPILGVSTAFKADTDPRKVDTSVGAYRDENGKPYVLKCVFEAEKRLLGAPKEYLPIDGIPEFNKLSAKLLYGDAMVGKEKRMVTVQALSGTGALRIGIIFIRKYLPAGTVVYISRPSWTNHHNICKESGVQSAEYAYYDPKTKGLDFTGMINDMRAAPNGSVFVLHLCAHNPTGVDPTHEQWNIIADVMREKNHIPFMDCAYQGYASGDLDYDAYSARLFLNRGFEMFSAQSYSKNFGLYGERTGALTIVSHREDVIPKMLSQLKMDIRAMYSSPPTHGARLVTTVLSDPELTALWVKELKEMSGRIKDVRQKVLDALIARKVPGNWEHIVNQIGMFTYTGLTKPQVDILVNKYHIYLLGSGRVSLAGLNNKNIDYFADAILDAVTSTQ.

3 residues coordinate L-aspartate: G73, W167, and N220. An N6-(pyridoxal phosphate)lysine modification is found at K284. R412 contributes to the L-aspartate binding site.

This sequence belongs to the class-I pyridoxal-phosphate-dependent aminotransferase family. In terms of assembly, homodimer. Pyridoxal 5'-phosphate is required as a cofactor.

It is found in the cytoplasm. It carries out the reaction L-aspartate + 2-oxoglutarate = oxaloacetate + L-glutamate. Functionally, plays a key role in amino acid metabolism. The chain is Aspartate aminotransferase, cytoplasmic (aatB) from Dictyostelium discoideum (Social amoeba).